Consider the following 453-residue polypeptide: Glutamyl-tRNA(Gln) amidotransferase subunit A (453 aa).

Residues Lys53 and Ser128 each act as charge relay system in the active site. Ser152 (acyl-ester intermediate) is an active-site residue.

It belongs to the amidase family. GatA subfamily. As to quaternary structure, heterotrimer of A, B and C subunits.

It catalyses the reaction L-glutamyl-tRNA(Gln) + L-glutamine + ATP + H2O = L-glutaminyl-tRNA(Gln) + L-glutamate + ADP + phosphate + H(+). Its function is as follows. Allows the formation of correctly charged Gln-tRNA(Gln) through the transamidation of misacylated Glu-tRNA(Gln) in organisms which lack glutaminyl-tRNA synthetase. The reaction takes place in the presence of glutamine and ATP through an activated gamma-phospho-Glu-tRNA(Gln). The protein is Glutamyl-tRNA(Gln) amidotransferase subunit A of Helicobacter pylori (strain G27).